We begin with the raw amino-acid sequence, 513 residues long: ATP synthase subunit alpha (513 aa).

169–176 is a binding site for ATP; the sequence is GDRQTGKT.

Belongs to the ATPase alpha/beta chains family. F-type ATPases have 2 components, CF(1) - the catalytic core - and CF(0) - the membrane proton channel. CF(1) has five subunits: alpha(3), beta(3), gamma(1), delta(1), epsilon(1). CF(0) has three main subunits: a(1), b(2) and c(9-12). The alpha and beta chains form an alternating ring which encloses part of the gamma chain. CF(1) is attached to CF(0) by a central stalk formed by the gamma and epsilon chains, while a peripheral stalk is formed by the delta and b chains.

It localises to the cell inner membrane. The catalysed reaction is ATP + H2O + 4 H(+)(in) = ADP + phosphate + 5 H(+)(out). Its function is as follows. Produces ATP from ADP in the presence of a proton gradient across the membrane. The alpha chain is a regulatory subunit. This is ATP synthase subunit alpha from Shewanella loihica (strain ATCC BAA-1088 / PV-4).